We begin with the raw amino-acid sequence, 494 residues long: Sulfate adenylyltransferase subunit 1 (494 aa).

The tr-type G domain maps to 24 to 240; sequence TRPLRLITCG…LELATVRSAQ (217 aa). Residues 33 to 40 are G1; it reads GSVDDGKS. 33–40 is a GTP binding site; sequence GSVDDGKS. Residues 91 to 95 are G2; the sequence is GITID. Residues 112-115 are G3; the sequence is DTPG. Residues 112–116 and 167–170 contribute to the GTP site; these read DTPGH and NKID. The interval 167 to 170 is G4; the sequence is NKID. The segment at 204 to 206 is G5; the sequence is SAL.

It belongs to the TRAFAC class translation factor GTPase superfamily. Classic translation factor GTPase family. CysN/NodQ subfamily. Heterodimer composed of CysD, the smaller subunit, and CysN.

The enzyme catalyses sulfate + ATP + H(+) = adenosine 5'-phosphosulfate + diphosphate. It functions in the pathway sulfur metabolism; hydrogen sulfide biosynthesis; sulfite from sulfate: step 1/3. Functionally, with CysD forms the ATP sulfurylase (ATPS) that catalyzes the adenylation of sulfate producing adenosine 5'-phosphosulfate (APS) and diphosphate, the first enzymatic step in sulfur assimilation pathway. APS synthesis involves the formation of a high-energy phosphoric-sulfuric acid anhydride bond driven by GTP hydrolysis by CysN coupled to ATP hydrolysis by CysD. In Rhizobium tropici, this protein is Sulfate adenylyltransferase subunit 1.